A 357-amino-acid polypeptide reads, in one-letter code: Phenylalanine--tRNA ligase alpha subunit (357 aa).

Position 257 (Glu257) interacts with Mg(2+).

It belongs to the class-II aminoacyl-tRNA synthetase family. Phe-tRNA synthetase alpha subunit type 1 subfamily. Tetramer of two alpha and two beta subunits. Requires Mg(2+) as cofactor.

The protein localises to the cytoplasm. The enzyme catalyses tRNA(Phe) + L-phenylalanine + ATP = L-phenylalanyl-tRNA(Phe) + AMP + diphosphate + H(+). The polypeptide is Phenylalanine--tRNA ligase alpha subunit (Ruegeria sp. (strain TM1040) (Silicibacter sp.)).